Here is a 463-residue protein sequence, read N- to C-terminus: Zinc finger protein interacting with ribonucleoprotein K (463 aa).

The KRAB domain maps to 14–89 (VTFQDVAICF…PKTNLCEKCV (76 aa)). Disordered regions lie at residues 106–128 (HSTE…KPLE) and 171–211 (KYRK…TSNG). Residues 174–191 (KSTEGRKETSHESDKSEE) are compositionally biased toward basic and acidic residues. Residues 192 to 201 (CQSLSSQKQT) are compositionally biased toward polar residues. 9 consecutive C2H2-type zinc fingers follow at residues 215 to 237 (YECS…QRVH), 243 to 265 (WECR…RRIH), 271 to 293 (YECS…QKTH), 299 to 321 (YECS…KRVH), 327 to 349 (YKCS…RRIH), 355 to 377 (YECR…QRVH), 383 to 405 (YKCS…RRIH), 411 to 433 (YECS…QVVH), and 439 to 461 (YECD…QKCH).

It belongs to the krueppel C2H2-type zinc-finger protein family. In terms of assembly, interacts with HNRPK. Expressed in ovary and liver, and at lower levels in brain and muscle.

Its subcellular location is the nucleus. In terms of biological role, may be a transcriptional repressor. This Mus musculus (Mouse) protein is Zinc finger protein interacting with ribonucleoprotein K (Zik1).